The primary structure comprises 336 residues: tRNA (guanine(37)-N(1))-methyltransferase Trm5b (336 aa).

Residues Arg186, 223–224 (DI), 251–252 (DV), and Asn265 contribute to the S-adenosyl-L-methionine site.

Belongs to the class I-like SAM-binding methyltransferase superfamily. TRM5/TYW2 family. In terms of assembly, monomer.

The protein resides in the cytoplasm. The enzyme catalyses guanosine(37) in tRNA + S-adenosyl-L-methionine = N(1)-methylguanosine(37) in tRNA + S-adenosyl-L-homocysteine + H(+). In terms of biological role, specifically methylates the N1 position of guanosine-37 in various tRNAs. This chain is tRNA (guanine(37)-N(1))-methyltransferase Trm5b (trm5b), found in Methanocaldococcus jannaschii (strain ATCC 43067 / DSM 2661 / JAL-1 / JCM 10045 / NBRC 100440) (Methanococcus jannaschii).